A 432-amino-acid chain; its full sequence is Glutamate-1-semialdehyde 2,1-aminomutase (432 aa).

An N6-(pyridoxal phosphate)lysine modification is found at Lys270.

Belongs to the class-III pyridoxal-phosphate-dependent aminotransferase family. HemL subfamily. In terms of assembly, homodimer. It depends on pyridoxal 5'-phosphate as a cofactor.

The protein localises to the cytoplasm. It catalyses the reaction (S)-4-amino-5-oxopentanoate = 5-aminolevulinate. It participates in porphyrin-containing compound metabolism; protoporphyrin-IX biosynthesis; 5-aminolevulinate from L-glutamyl-tRNA(Glu): step 2/2. The polypeptide is Glutamate-1-semialdehyde 2,1-aminomutase (Acinetobacter baylyi (strain ATCC 33305 / BD413 / ADP1)).